We begin with the raw amino-acid sequence, 210 residues long: Ribonuclease HII (210 aa).

The 202-residue stretch at 2–203 (SGVMGIDEAG…YKRVESEVKQ (202 aa)) folds into the RNase H type-2 domain. The a divalent metal cation site is built by Asp8, Glu9, and Asp99.

Belongs to the RNase HII family. Mn(2+) is required as a cofactor. Mg(2+) serves as cofactor.

It is found in the cytoplasm. It carries out the reaction Endonucleolytic cleavage to 5'-phosphomonoester.. In terms of biological role, endonuclease that specifically degrades the RNA of RNA-DNA hybrids. In Methanopyrus kandleri (strain AV19 / DSM 6324 / JCM 9639 / NBRC 100938), this protein is Ribonuclease HII.